Here is a 223-residue protein sequence, read N- to C-terminus: Sigma non-opioid intracellular receptor 1 (223 aa).

Over M1–W9 the chain is Lumenal. Residues Q2–R8 form a targeting to endoplasmic reticulum-associated lipid droplets region. The helical transmembrane segment at A10–L30 threads the bilayer. Topologically, residues G31–S223 are cytoplasmic. Residues S99–L106 form an important for ligand-binding region. Residues V177–S223 are C-terminal hydrophobic region.

This sequence belongs to the ERG2 family. Homotrimer. Forms a ternary complex with ANK2 and ITPR3. The complex is disrupted by agonists. Interacts with KCNA4. Interacts with KCNA2; cocaine consumption leads to increased interaction. Interacts with RNF112 in an oxidative stress-regulated manner.

The protein localises to the nucleus inner membrane. Its subcellular location is the nucleus outer membrane. It is found in the nucleus envelope. The protein resides in the cytoplasmic vesicle. It localises to the endoplasmic reticulum membrane. The protein localises to the membrane. Its subcellular location is the lipid droplet. It is found in the cell junction. The protein resides in the cell membrane. It localises to the cell projection. The protein localises to the growth cone. Its subcellular location is the postsynaptic density membrane. Functions in lipid transport from the endoplasmic reticulum and is involved in a wide array of cellular functions probably through regulation of the biogenesis of lipid microdomains at the plasma membrane. Involved in the regulation of different receptors it plays a role in BDNF signaling and EGF signaling. Also regulates ion channels like the potassium channel and could modulate neurotransmitter release. Plays a role in calcium signaling through modulation together with ANK2 of the ITP3R-dependent calcium efflux at the endoplasmic reticulum. Plays a role in several other cell functions including proliferation, survival and death. Originally identified for its ability to bind various psychoactive drugs it is involved in learning processes, memory and mood alteration. Necessary for proper mitochondrial axonal transport in motor neurons, in particular the retrograde movement of mitochondria. Plays a role in protecting cells against oxidative stress-induced cell death via its interaction with RNF112. The polypeptide is Sigma non-opioid intracellular receptor 1 (SIGMAR1) (Trichosurus vulpecula (Brush-tailed possum)).